The following is a 119-amino-acid chain: MARVKRGVQARRRHKKILSLAKGYYNARRKVFRVAKQAVIKAQQYAYIGRKQKKRNFRSLWIVRINAAARMNGLSYSRFMNGILKCGITLDRKMLADIAVHDPAGFTALAEKAKTMLAA.

The protein belongs to the bacterial ribosomal protein bL20 family.

Binds directly to 23S ribosomal RNA and is necessary for the in vitro assembly process of the 50S ribosomal subunit. It is not involved in the protein synthesizing functions of that subunit. The sequence is that of Large ribosomal subunit protein bL20 from Xylella fastidiosa (strain M23).